Reading from the N-terminus, the 156-residue chain is Ribosome maturation factor RimP (156 aa).

Belongs to the RimP family.

Its subcellular location is the cytoplasm. Required for maturation of 30S ribosomal subunits. The protein is Ribosome maturation factor RimP of Bacillus velezensis (strain DSM 23117 / BGSC 10A6 / LMG 26770 / FZB42) (Bacillus amyloliquefaciens subsp. plantarum).